The primary structure comprises 786 residues: Rho GTPase-activating protein 10 (786 aa).

Residues 7–262 (EFSDCYLDSP…IRQNPKDQKR (256 aa)) form the BAR domain. A PH domain is found at 265–372 (QFTAEGYLYV…WLEALGGKEA (108 aa)). Residues 389-574 (AQLDKMGFTI…ILIENHEKIF (186 aa)) form the Rho-GAP domain. 2 disordered regions span residues 584–609 (EPTC…RTKR) and 622–714 (EGDS…PFPL). Residues 599-609 (QSKRQGQRTKR) are compositionally biased toward basic residues. A compositionally biased stretch (low complexity) spans 634 to 649 (PSSSQDSLSTPSPTTS). The span at 673–701 (TATTPSQTRPSMVQWLNMQSPTTPSSNPA) shows a compositional bias: polar residues. Residues 702 to 714 (GTPPSPRMSPFPL) are compositionally biased toward pro residues. The 59-residue stretch at 728–786 (VINRKARAVYPCEAEHSSELSFEIGAIFEDVQTSREPGWLEGTLNGKRGLIPQNYVKLL) folds into the SH3 domain.

As to quaternary structure, interacts with PKN3. Interacts with caspase-activated PAK2 proteolytic fragment PAK-2p34; the interaction does not affect ARHGAP10 GTPase activation activity towards RHOA and CDC42. Interacts via its SH3 domain with PTK2/FAK1. Interacts with PTK2B/PYK2; the interaction negatively regulates ARHGAP10 GTPase-activating activity. Interacts with MICAL1 and WDR44; complex formation might transit from GRAF2/ARHGAP10-MICAL1 to GRAF2/ARHGAP10-WDR44 complexes. Post-translationally, phosphorylated on tyrosine residues, probably involving PTK2B/PYK2. In terms of tissue distribution, high levels of expression in brain, testes, liver, heart and kidney.

The protein localises to the cytoplasm. It is found in the perinuclear region. Its subcellular location is the cell membrane. The protein resides in the endosome membrane. Its function is as follows. GTPase-activating protein that catalyzes the conversion of active GTP-bound Rho GTPases to their inactive GDP-bound form, thus suppressing various Rho GTPase-mediated cellular processes. Also converts Cdc42 to an inactive GDP-bound state. Essential for PTKB2 regulation of cytoskeletal organization via Rho family GTPases. Inhibits PAK2 proteolytic fragment PAK-2p34 kinase activity and changes its localization from the nucleus to the perinuclear region. Stabilizes PAK-2p34 thereby increasing stimulation of cell death. Associates with MICAL1 on the endosomal membrane to promote Rab8-Rab10-dependent tubule extension. After dissociation with MICAL1, recruits WDR44 which connects the endoplasmic reticulum (ER) with the endosomal tubule, thereby participating in the export of a subset of neosynthesized proteins. This is Rho GTPase-activating protein 10 (Arhgap10) from Mus musculus (Mouse).